The primary structure comprises 40 residues: MTQSKSNPNEQNVELNRTSLYWGLLLIFVLAVLFSNYFFN.

The helical transmembrane segment at 19–39 (SLYWGLLLIFVLAVLFSNYFF) threads the bilayer.

The protein belongs to the PsbL family. PSII is composed of 1 copy each of membrane proteins PsbA, PsbB, PsbC, PsbD, PsbE, PsbF, PsbH, PsbI, PsbJ, PsbK, PsbL, PsbM, PsbT, PsbX, PsbY, PsbZ, Psb30/Ycf12, at least 3 peripheral proteins of the oxygen-evolving complex and a large number of cofactors. It forms dimeric complexes.

It is found in the plastid. The protein localises to the chloroplast thylakoid membrane. One of the components of the core complex of photosystem II (PSII). PSII is a light-driven water:plastoquinone oxidoreductase that uses light energy to abstract electrons from H(2)O, generating O(2) and a proton gradient subsequently used for ATP formation. It consists of a core antenna complex that captures photons, and an electron transfer chain that converts photonic excitation into a charge separation. This subunit is found at the monomer-monomer interface and is required for correct PSII assembly and/or dimerization. This Nandina domestica (Heavenly bamboo) protein is Photosystem II reaction center protein L.